We begin with the raw amino-acid sequence, 875 residues long: Probable ATP-dependent RNA helicase DDX10 (875 aa).

The disordered stretch occupies residues 1-44 (MGKTVASLGQGTRPDPVRSFNRWKKKHSHRQHQKKERRKQLKKP). The residue at position 4 (T4) is a Phosphothreonine. At S7 the chain carries Phosphoserine. A compositionally biased stretch (basic residues) spans 21–41 (NRWKKKHSHRQHQKKERRKQL). The Q motif signature appears at 69 to 97 (TRFSDFPLSKKTLKGLQEAQYRLVTEIQK). Residues 89-91 (YRL), Q96, and 113-120 (AKTGSGKT) contribute to the ATP site. In terms of domain architecture, Helicase ATP-binding spans 100–274 (IGLALQGKDV…RLSLKDPEYV (175 aa)). The DEAD box signature appears at 222-225 (DEAD). One can recognise a Helicase C-terminal domain in the interval 300–449 (KISVLFSFLR…EIKINPEKLI (150 aa)). The tract at residues 525 to 612 (LVKNPVTEAV…HTESVVSIEE (88 aa)) is disordered. A Phosphoserine modification is found at S540. Residue K556 is modified to N6-acetyllysine. The segment covering 562–575 (KSGERLEETEHRLA) has biased composition (basic and acidic residues). The span at 578 to 593 (DGDEEQDEETEDEETE) shows a compositional bias: acidic residues. T587 carries the phosphothreonine modification. A compositionally biased stretch (basic and acidic residues) spans 594–604 (DHLGKAREPHT). K652 participates in a covalent cross-link: Glycyl lysine isopeptide (Lys-Gly) (interchain with G-Cter in SUMO2). Over residues 734-744 (EEDKFDKEEYR) the composition is skewed to basic and acidic residues. The disordered stretch occupies residues 734 to 860 (EEDKFDKEEY…VEPLDTGLSL (127 aa)). A compositionally biased stretch (basic residues) spans 745–754 (KKIKAKHRER). The span at 755–774 (RLKEREARREANKRQAKARD) shows a compositional bias: basic and acidic residues. A compositionally biased stretch (acidic residues) spans 775-789 (EEEAFLDWSDEDDGG). Phosphoserine is present on S783. The span at 797-831 (DPDKHRSSEESESEDTNHKMSDTKKKQETRKRNNT) shows a compositional bias: basic and acidic residues.

The protein belongs to the DEAD box helicase family. DDX10/DBP4 subfamily. In terms of assembly, interacts with AIM2; this interaction promotes AIM2 stability. Interacts with SCNA; this interaction causes DDX10 mislocalization to the nucleoplasm and cytoplasmic inclusions.

Its subcellular location is the cytoplasm. The protein localises to the nucleus. The protein resides in the nucleolus. It catalyses the reaction ATP + H2O = ADP + phosphate + H(+). Putative ATP-dependent RNA helicase that plays various role in innate immunity or inflammation. Plays a role in the enhancement of AIM2-induced inflammasome activation by interacting with AIM2 and stabilizing its protein level. Negatively regulates viral infection by promoting interferon beta production and interferon stimulated genes/ISGs expression. The chain is Probable ATP-dependent RNA helicase DDX10 (Ddx10) from Mus musculus (Mouse).